The following is a 167-amino-acid chain: Translationally-controlled tumor protein homolog (167 aa).

The TCTP domain maps to 1–167 (MIIFKDVISN…WKHGIKEEKI (167 aa)).

The protein belongs to the TCTP family.

The protein resides in the cytoplasm. It localises to the cytoskeleton. Involved in protein synthesis. Involved in microtubule stabilization. This is Translationally-controlled tumor protein homolog from Yarrowia lipolytica (strain CLIB 122 / E 150) (Yeast).